The following is a 227-amino-acid chain: Ribonuclease 3 (227 aa).

In terms of domain architecture, RNase III spans 6–128 (ASDYQQRIGY…VIAAIYLDAD (123 aa)). Mg(2+) is bound at residue Glu41. Asp45 is an active-site residue. Mg(2+) contacts are provided by Asp114 and Glu117. Glu117 is a catalytic residue. One can recognise a DRBM domain in the interval 155-225 (DPKTRLQEWL…ASHAIDQLDS (71 aa)). Residues 203–212 (GEGSSRRLAE) are compositionally biased toward basic and acidic residues. The disordered stretch occupies residues 203–227 (GEGSSRRLAEQDAASHAIDQLDSNK).

It belongs to the ribonuclease III family. Homodimer. Mg(2+) is required as a cofactor.

The protein resides in the cytoplasm. The enzyme catalyses Endonucleolytic cleavage to 5'-phosphomonoester.. Functionally, digests double-stranded RNA. Involved in the processing of primary rRNA transcript to yield the immediate precursors to the large and small rRNAs (23S and 16S). Processes some mRNAs, and tRNAs when they are encoded in the rRNA operon. Processes pre-crRNA and tracrRNA of type II CRISPR loci if present in the organism. This Xylella fastidiosa (strain 9a5c) protein is Ribonuclease 3.